Here is a 101-residue protein sequence, read N- to C-terminus: Alkene monooxygenase system, effector subunit (101 aa).

It belongs to the TmoD/XamoD family. In terms of assembly, monomer. The alkene monooxygenase multicomponent enzyme system is composed of an electron transfer component and a monooxygenase component interacting with the effector protein XamoD. The electron transfer component is composed of a ferredoxin reductase (XamoF) and a ferredoxin (XamoC), and the monooxygenase component is formed by a heterohexamer (dimer of heterotrimers) of two alpha subunits (XamoA), two beta subunits (XamoE) and two gamma subunits (XamoB).

The protein localises to the cytoplasm. In terms of biological role, effector component of the alkene monooxygenase multicomponent enzyme system which catalyzes the O2- and NADH-dependent epoxidation of short chain (C2 to C6) alkenes to their corresponding epoxides. One possible role of this small protein might be to facilitate electron transfer between the reductase and ferredoxin components. In Xanthobacter autotrophicus (strain ATCC BAA-1158 / Py2), this protein is Alkene monooxygenase system, effector subunit.